A 981-amino-acid polypeptide reads, in one-letter code: Probable NAD kinase 2, chloroplastic (981 aa).

Residues 319-364 (APSAEQVQRFAEIVSDSAKKPIYLHSQEGISRTSAMVSRWKQYVTR) are calmodulin-binding. 2 disordered regions span residues 369 to 413 (ATQN…DRTM) and 551 to 601 (TNGK…AERN). 3 stretches are compositionally biased toward polar residues: residues 387–406 (TEQL…NGTP), 551–563 (TNGK…ASTS), and 581–596 (SDTS…GSQK).

The protein belongs to the NAD kinase family.

The protein resides in the plastid. It localises to the chloroplast. The catalysed reaction is NAD(+) + ATP = ADP + NADP(+) + H(+). Involved in chlorophyll synthesis and chloroplast protection against oxidative damage. In Oryza sativa subsp. japonica (Rice), this protein is Probable NAD kinase 2, chloroplastic.